An 855-amino-acid chain; its full sequence is E3 ubiquitin-protein ligase TRIM71 (855 aa).

An N-acetylalanine modification is found at Ala-2. The RING-type zinc finger occupies 12-94; sequence CLLCKEMCGS…ALKLRCPVCD (83 aa). A compositionally biased stretch (low complexity) spans 26 to 42; the sequence is SSNSSASSSSSQTSTSS. Disordered regions lie at residues 26-48 and 127-177; these read SSNS…GGGP and EEPP…SPGS. Residues 135–145 show a composition bias toward gly residues; sequence RAGGGPGGAGG. Over residues 147-157 the composition is skewed to basic residues; sequence SNHRHHAHHPA. The B box-type 1; atypical zinc finger occupies 181–228; sequence RRPHGCSSCDEGNAASSRCLDCQEHLCDNCVRAHQRVRLTKDHYIERG. The B box-type 2 zinc finger occupies 260 to 301; it reads ERLGFCQHHDDEVLHLYCDTCSVPICRECTLGRHGGHSFAYL. 4 residues coordinate Zn(2+): Cys-265, His-268, Cys-288, and His-293. 2 coiled-coil regions span residues 314–352 and 378–411; these read QLLA…SEVK and QVKA…VLEE. One copy of the Filamin repeat lies at 466–567; sequence SSGAFAPLTK…IENSPFKVVV (102 aa). NHL repeat units lie at residues 580 to 623, 627 to 670, 674 to 717, 721 to 764, 768 to 811, and 815 to 855; these read GLSF…FKPC, HHKF…FTFE, LLKF…FGPD, LNKY…IHPD, ARFL…FEAN, and LCKF…ILIF.

It belongs to the TRIM/RBCC family. In terms of assembly, interacts (via NHL repeats) with AGO2; the interaction increases in presence of RNA. Interacts with HSP90AA1. Interacts (via NHL repeats) with MOV10, PABPC1, PUM1, PUM2, STAU2, XRN1 and XRN2 in an RNA-dependent manner. Interacts with SHCBP1; leading to enhance its stability. Post-translationally, autoubiquitinated. Highly expressed in undifferentiated embryonic stem cells (ESCs). Expressed in the epiblast and in interfollicular epidermal stem cells during early development. Also expressed in male germ cells and in the reproductive tract. Highly expressed in neuroepithelial cells, and its expression declines as neurogenesis proceeds (at protein level). Expressed in ependymal cells of the brain.

It localises to the cytoplasm. The protein localises to the P-body. It catalyses the reaction S-ubiquitinyl-[E2 ubiquitin-conjugating enzyme]-L-cysteine + [acceptor protein]-L-lysine = [E2 ubiquitin-conjugating enzyme]-L-cysteine + N(6)-ubiquitinyl-[acceptor protein]-L-lysine.. Its pathway is protein modification; protein ubiquitination. E3 ubiquitin-protein ligase that cooperates with the microRNAs (miRNAs) machinery and promotes embryonic stem cells proliferation and maintenance. Binds to miRNAs and associates with AGO2, participating in post-transcriptional repression of transcripts such as CDKN1A. Facilitates the G1-S transition to promote rapid embryonic stem cell self-renewal by repressing CDKN1A expression. In addition, participates in post-transcriptional mRNA repression in a miRNA independent mechanism. Required to maintain proliferation and prevent premature differentiation of neural progenitor cells during early neural development: positively regulates FGF signaling by controlling the stability of SHCBP1. Specific regulator of miRNA biogenesis. miRNA Binds MIR29A hairpin and postranscriptionally modulates MIR29A levels, which indirectly regulates TET proteins expression. The chain is E3 ubiquitin-protein ligase TRIM71 (Trim71) from Mus musculus (Mouse).